Here is a 1099-residue protein sequence, read N- to C-terminus: Solute carrier family 12 member 1 (1099 aa).

Over 1–177 the chain is Cytoplasmic; it reads MSLNNSSSVF…EDNKAGAVKF (177 aa). An RFXV motif motif is present at residues 20-23; sequence RFQV. Phosphoserine occurs at positions 60 and 90. Phosphothreonine is present on residues Thr94, Thr99, Thr104, and Thr117. The residue at position 119 (Ser119) is a Phosphoserine. Ser129 is modified (phosphoserine; by AMPK). A Phosphoserine modification is found at Ser147. Positions 147-169 are disordered; it reads SADRVANGEGMPGEEHAENKEED. Over residues 159–169 the composition is skewed to basic and acidic residues; the sequence is GEEHAENKEED. Residues 178-198 traverse the membrane as a helical segment; that stretch reads GWVKGVLVRCMLNIWGVMLFI. The Extracellular portion of the chain corresponds to 199–201; that stretch reads RLS. The chain crosses the membrane as a helical span at residues 202-222; the sequence is WIVGEAGIGLGVVIILLSTMV. Topologically, residues 223–259 are cytoplasmic; the sequence is TSITGLSTSAIATNGFVRGGGAYYLISRSLGPEFGGS. Residues 260-280 traverse the membrane as a helical segment; it reads IGLIFAFANAVAVAMYVVGFA. Over 281–302 the chain is Extracellular; that stretch reads ETVVDLLKESDSMMVDPTNDIR. A helical membrane pass occupies residues 303-323; sequence IIGSITVVILLGISVAGMEWE. Residues 324 to 327 lie on the Cytoplasmic side of the membrane; sequence AKAQ. A helical transmembrane segment spans residues 328-348; that stretch reads VILLIILLIAIANFFIGTVIP. Residues 349–379 lie on the Extracellular side of the membrane; that stretch reads SNNEKKSRGFFNYQASIFAENFGPSFTKGEG. A helical membrane pass occupies residues 380–400; that stretch reads FFSVFAIFFPAATGILAGANI. Residues 401 to 417 are Cytoplasmic-facing; the sequence is SGDLEDPQDAIPRGTML. Residues 418 to 438 traverse the membrane as a helical segment; sequence AIFITTVAYIGVAICVGACVV. The Extracellular segment spans residues 439-550; sequence RDATGSMNDT…NNEPLRGYIL (112 aa). 2 N-linked (GlcNAc...) asparagine glycosylation sites follow: Asn446 and Asn456. 2 helical membrane passes run 551 to 571 and 572 to 592; these read TFVIAMAFILIAELNTIAPII and SNFFLASYALINFSCFHASYA. The Extracellular segment spans residues 593-609; that stretch reads KSPGWRPAYGIYNMWVS. A helical membrane pass occupies residues 610-630; sequence LFGAVLCCAVMFVINWWAAVI. At 631–1099 the chain is on the cytoplasmic side; the sequence is TYVIEFFLYI…NHKNVLTFYS (469 aa).

The protein belongs to the SLC12A transporter family. As to quaternary structure, when phosphorylated, interacts with PPP3CB. Phosphorylated at Ser-90, Thr-99 and Thr-104 by OXSR1/OSR1 and STK39/SPAK downstream of WNK kinases (WNK1, WNK2, WNK3 or WNK4), promoting its activity. As to expression, predominant in kidney. The 3 isoforms are differentially distributed within the kidney: B almost exclusively in cortex, F almost exclusively in medulla, and A about equally distributed.

It is found in the apical cell membrane. The enzyme catalyses K(+)(out) + 2 chloride(out) + Na(+)(out) = K(+)(in) + 2 chloride(in) + Na(+)(in). With respect to regulation, activated following phosphorylation by OXSR1/OSR1 and STK39/SPAK downstream of WNK kinases (WNK1, WNK2, WNK3 or WNK4). Renal sodium, potassium and chloride ion cotransporter that mediates the transepithelial NaCl reabsorption in the thick ascending limb and plays an essential role in the urinary concentration and volume regulation. Electrically silent transporter system. The chain is Solute carrier family 12 member 1 (SLC12A1) from Oryctolagus cuniculus (Rabbit).